Consider the following 260-residue polypeptide: MLKSYRAVLVSLSLLLVFVLSGCSNATPIDAHSTGIWDHYFVYPISFMIQFVAHHIPGASFGIAIIIMTLVIRSAMIPLAVSQYRSQAKMKKMQPELQKLKQKYGDVSKDLEKQKQYQKEMSELMKSGGWNPLAGCWPLLIQMPIFSALYYAISRTEEIRTSTFLWVNLGHADPYHILPIIAALTTFIQMKVFQSNSTSGEQVQMLKMQQIMMPAMILFMGFAAPSGLVLYWITGNLFTMMQTIVLRKIMEREELQLQKA.

An N-terminal signal peptide occupies residues 1–22 (MLKSYRAVLVSLSLLLVFVLSG). Residue cysteine 23 is the site of N-palmitoyl cysteine attachment. A lipid anchor (S-diacylglycerol cysteine) is attached at cysteine 23. A run of 5 helical transmembrane segments spans residues 29 to 49 (IDAH…SFMI), 52 to 72 (VAHH…TLVI), 133 to 153 (LAGC…YYAI), 164 to 184 (FLWV…IAAL), and 213 to 233 (MPAM…LYWI).

Belongs to the OXA1/ALB3/YidC family. Type 2 subfamily.

It is found in the cell membrane. Required for the insertion and/or proper folding and/or complex formation of integral membrane proteins into the membrane. Involved in integration of membrane proteins that insert both dependently and independently of the Sec translocase complex, as well as at least some lipoproteins. The sequence is that of Membrane protein insertase YidC 1 from Bacillus anthracis.